The primary structure comprises 603 residues: MEAARMGFRAKTLPHLGNGTRLPLKTKLSLFPMHLLQNHTTLSRRSTKLNLCVKACSKTSGVESSRPLPHSAPDLWGDHILSVPTENSEFDTLETEIESIKPKVRNMLMSSHKTDKERICLIHLLICLGTFHYFEKEIEEILEQAFRKLDMLFTDEDDLETTAIMFEVFRLYGHKISCDVFDRFKGVDAKFKEHLVSDVRGMLQLYEAAHLATPFETILDEALSFTRYHLESLAGQQATAPHISRHILNALYKPRFLKMEIIAAREYIHFYQKEGHDETLLKFAKLNFNFCQLHYVRELKTLTKWWKDIDLPYKLPYIRDRLLETFIGVMAVYLEPHYSLGRIIATKVSQVIVVMDDTCDAYGTFSEVRSLIDSLERWDPGAIDKLPSCLRIVIQSIVETMEDIEREMKPRGRSSSVQDTVEEIKIMGRAYAEISKWARAGHVPTFDDYIELGLDSSGIRCFAMYSFISMEDCEENQTNAWFKSKPKMLRALSVIFRLTNDIAGFEEEMRRGEVVNGVNCYVKQHNVTKELAVREIKKMIRDNYKIMMEEFLTIKSVSRPILVRCFNIVRLVNLYYEEGDNFTNPNGKLKDLITSLFFHPLPL.

Residues Asp-356, Asp-360, Asn-500, and Glu-508 each contribute to the Mg(2+) site. Residues 356–360 (DDTCD) carry the DDXXD motif motif.

It belongs to the terpene synthase family. Tpsa subfamily. Mg(2+) is required as a cofactor. It depends on Mn(2+) as a cofactor. Predominantly expressed in siliques but also in flowers.

It localises to the cytoplasm. It participates in secondary metabolite biosynthesis; terpenoid biosynthesis. Involved in terpene biosynthesis in roots. Possesses sesquiterpene (C15) synthase activity in vitro. Does not seem to be involved in diterpene (C20) biosynthesis. This Arabidopsis thaliana (Mouse-ear cress) protein is Terpenoid synthase 22.